A 129-amino-acid chain; its full sequence is MVYLAVGIAGMIGALVRYGLGLVVPAAAVGGFPLGTLFINWTGSFLLSWFTVMFTRRPAWPPWLKTAVTTGFVGSYTTFSTLSVECVELMEQGRFGMAAVYIAASLFGGLLASWAGYAAAQPERKEGIG.

The helical transmembrane segment at 19–39 (GLGLVVPAAAVGGFPLGTLFI) threads the bilayer. 2 residues coordinate Na(+): G74 and T77. The chain crosses the membrane as a helical span at residues 95–115 (FGMAAVYIAASLFGGLLASWA).

Belongs to the fluoride channel Fluc/FEX (TC 1.A.43) family.

It is found in the cell membrane. The catalysed reaction is fluoride(in) = fluoride(out). Its activity is regulated as follows. Na(+) is not transported, but it plays an essential structural role and its presence is essential for fluoride channel function. In terms of biological role, fluoride-specific ion channel. Important for reducing fluoride concentration in the cell, thus reducing its toxicity. This chain is Fluoride-specific ion channel FluC 2, found in Geobacillus kaustophilus (strain HTA426).